An 808-amino-acid chain; its full sequence is Potassium transporter 5 (808 aa).

The Cytoplasmic portion of the chain corresponds to 1–65 (MAEEVGETRG…NQVNWKKTLS (65 aa)). Residues 66 to 86 (LTFQSIGVVYGDIGTSPLYVY) form a helical membrane-spanning segment. The Extracellular segment spans residues 87–102 (ESTFPDKIGSKEDILG). A helical membrane pass occupies residues 103–123 (VLSLIIYTLVLLPMLKYVFIV). At 124–189 (LRANDNGDGG…EKMENSKNIK (66 aa)) the chain is on the cytoplasmic side. The helical transmembrane segment at 190-210 (ILLFLVTILGTSMVIGDGVLT) threads the bilayer. Residues 211–221 (PCISVLSAVSG) lie on the Extracellular side of the membrane. A helical membrane pass occupies residues 222-242 (IGSLGQDAVVGISIAILIVLF). Over 243–251 (CAQRLGTDK) the chain is Cytoplasmic. Residues 252-272 (VGFSFAPIILLWFSFIGGIGL) form a helical membrane-spanning segment. Residues 273–302 (YNLFKYDVSVLRAFNPKYMFDYFKRNGKQG) are Extracellular-facing. A helical transmembrane segment spans residues 303-323 (WISLGGVVLAVTGTEAMFADL). At 324–327 (GHFN) the chain is on the cytoplasmic side. Residues 328–348 (VQAIQISFSGIVFPALLCAYA) traverse the membrane as a helical segment. Residues 349–379 (GQAAYLTKFPDDVSKTFYKSIPDPLYWPTFV) are Extracellular-facing. Residues 380-400 (VAVAAAIIASQAMISGAFAII) form a helical membrane-spanning segment. Topologically, residues 401–424 (SQSLSLGCFPRVKVIHTSAKYEGQ) are cytoplasmic. Residues 425–445 (VYIPEVNYILMIACIMVCLGF) form a helical membrane-spanning segment. The Extracellular segment spans residues 446-456 (KTTEKIGNAYG). The helical transmembrane segment at 457-477 (IAVVAVMVITTCMVTIIMLVV) threads the bilayer. At 478-482 (WRTKM) the chain is on the cytoplasmic side. Residues 483–503 (IWIAFFFFGFICIEAVYLSSV) traverse the membrane as a helical segment. The Extracellular portion of the chain corresponds to 504–510 (LYKFKDG). The chain crosses the membrane as a helical span at residues 511–531 (GFLPLAFSFFLMIIMGIWHYI). The Cytoplasmic segment spans residues 532 to 808 (HKERYMYELK…LLRVGMTYEI (277 aa)). Residues 699–722 (LQQPNPSRVSSGSIHSNSGIKSTK) form a disordered region.

The protein belongs to the HAK/KUP transporter (TC 2.A.72.3) family. In terms of tissue distribution, expressed in the roots.

The protein localises to the cell membrane. The enzyme catalyses K(+)(in) = K(+)(out). Functionally, high-affinity potassium transporter that functions under low potassium conditions. Involved in the positive regulation of salt tolerance under salt stress. The chain is Potassium transporter 5 from Manihot esculenta (Cassava).